The sequence spans 108 residues: Small ribosomal subunit protein eS25y (108 aa).

A disordered region spans residues 1-36; sequence MAPKKDKVPPPSSKPAKSGGGKQKKKKWSKGKQKEK. A compositionally biased stretch (basic residues) spans 22-31; the sequence is KQKKKKWSKG.

This sequence belongs to the eukaryotic ribosomal protein eS25 family.

The protein is Small ribosomal subunit protein eS25y (RPS25B) of Arabidopsis thaliana (Mouse-ear cress).